The following is a 403-amino-acid chain: uncharacterized protein (403 aa).

12 helical membrane-spanning segments follow: residues 25–47, 62–81, 88–110, 114–136, 143–165, 175–197, 229–251, 256–278, 290–307, 311–330, 350–372, and 376–398; these read IAFFLAGFSTFSTLYCVQPILFL, SLSASTAMMAFGMLFTGPLS, VVMSSSLFLASFCTFCCSNMNSW, IFMRALTGLALSGVAAVAMTYLS, VLSFSIGLYISGNTIGGFLGRFL, WNIALEFISFLAFTSAVLFVYLL, LFFMGCILMGSFITLFNYVGYRL, FFLGQTTIGLLSIIYLIGVYSSP, GVILTLALTMMIFGVLIT, IVLLIIVGLTLFAAGFFAAH, SIYLFSYYLGSSIFGTFSGIFWI, and WLGISIFIITFLCIGILLSIRLL.

The protein belongs to the major facilitator superfamily.

The protein localises to the cell membrane. This is an uncharacterized protein from Buchnera aphidicola subsp. Baizongia pistaciae (strain Bp).